Here is an 836-residue protein sequence, read N- to C-terminus: Protein translocase subunit SecA (836 aa).

Residues Q85, 103 to 107 (GEGKT), and D492 each bind ATP. Zn(2+) contacts are provided by C820, C822, C831, and C832.

The protein belongs to the SecA family. In terms of assembly, monomer and homodimer. Part of the essential Sec protein translocation apparatus which comprises SecA, SecYEG and auxiliary proteins SecDF. Other proteins may also be involved. It depends on Zn(2+) as a cofactor.

The protein resides in the cell membrane. The protein localises to the cytoplasm. It carries out the reaction ATP + H2O + cellular proteinSide 1 = ADP + phosphate + cellular proteinSide 2.. In terms of biological role, part of the Sec protein translocase complex. Interacts with the SecYEG preprotein conducting channel. Has a central role in coupling the hydrolysis of ATP to the transfer of proteins into and across the cell membrane, serving as an ATP-driven molecular motor driving the stepwise translocation of polypeptide chains across the membrane. The sequence is that of Protein translocase subunit SecA from Clostridium botulinum (strain Alaska E43 / Type E3).